The chain runs to 229 residues: 2-C-methyl-D-erythritol 4-phosphate cytidylyltransferase (229 aa).

This sequence belongs to the IspD/TarI cytidylyltransferase family. IspD subfamily.

The enzyme catalyses 2-C-methyl-D-erythritol 4-phosphate + CTP + H(+) = 4-CDP-2-C-methyl-D-erythritol + diphosphate. Its pathway is isoprenoid biosynthesis; isopentenyl diphosphate biosynthesis via DXP pathway; isopentenyl diphosphate from 1-deoxy-D-xylulose 5-phosphate: step 2/6. Catalyzes the formation of 4-diphosphocytidyl-2-C-methyl-D-erythritol from CTP and 2-C-methyl-D-erythritol 4-phosphate (MEP). In Neisseria meningitidis serogroup C / serotype 2a (strain ATCC 700532 / DSM 15464 / FAM18), this protein is 2-C-methyl-D-erythritol 4-phosphate cytidylyltransferase.